The chain runs to 595 residues: Potassium-transporting ATPase potassium-binding subunit (595 aa).

Helical transmembrane passes span Ile-9–Ala-29, Thr-63–Leu-83, Gly-135–Ile-155, Ile-177–Val-197, Phe-285–Met-305, Gly-312–Leu-332, Gly-412–Gly-432, Ala-451–Leu-471, Leu-516–Ile-536, and Phe-560–Leu-580.

It belongs to the KdpA family. As to quaternary structure, the system is composed of three essential subunits: KdpA, KdpB and KdpC.

It is found in the cell inner membrane. Its function is as follows. Part of the high-affinity ATP-driven potassium transport (or Kdp) system, which catalyzes the hydrolysis of ATP coupled with the electrogenic transport of potassium into the cytoplasm. This subunit binds the periplasmic potassium ions and delivers the ions to the membrane domain of KdpB through an intramembrane tunnel. This is Potassium-transporting ATPase potassium-binding subunit from Methylococcus capsulatus (strain ATCC 33009 / NCIMB 11132 / Bath).